The primary structure comprises 1408 residues: DNA-directed RNA polymerase subunit beta' (1408 aa).

Positions 70, 72, 85, and 88 each coordinate Zn(2+). D460, D462, and D464 together coordinate Mg(2+). Zn(2+)-binding residues include C822, C896, C903, and C906. The interval 1386–1408 is disordered; that stretch reads DTGEAPPLSEEETGEIRNSGYAV.

The protein belongs to the RNA polymerase beta' chain family. The RNAP catalytic core consists of 2 alpha, 1 beta, 1 beta' and 1 omega subunit. When a sigma factor is associated with the core the holoenzyme is formed, which can initiate transcription. The cofactor is Mg(2+). It depends on Zn(2+) as a cofactor.

It carries out the reaction RNA(n) + a ribonucleoside 5'-triphosphate = RNA(n+1) + diphosphate. In terms of biological role, DNA-dependent RNA polymerase catalyzes the transcription of DNA into RNA using the four ribonucleoside triphosphates as substrates. This is DNA-directed RNA polymerase subunit beta' from Nitrosospira multiformis (strain ATCC 25196 / NCIMB 11849 / C 71).